Consider the following 105-residue polypeptide: UPF0473 protein SAK_2028 (105 aa).

Belongs to the UPF0473 family.

The sequence is that of UPF0473 protein SAK_2028 from Streptococcus agalactiae serotype Ia (strain ATCC 27591 / A909 / CDC SS700).